Consider the following 521-residue polypeptide: Spermidine transporter DUR31 (521 aa).

A helical transmembrane segment spans residues 11–31 (AIIYLSYAFMLATGLFLAWKF). The N-linked (GlcNAc...) asparagine glycan is linked to N41. The next 12 helical transmembrane spans lie at 47-67 (IPLA…TTYA), 79-99 (LVYT…GPVI), 117-137 (FGMV…FLFM), 156-176 (ALGA…FGGF), 187-207 (GVCV…YIEI), 227-247 (LVYI…GFWL), 264-284 (IAAF…FLAV), 310-330 (WLVA…FDSL), 354-374 (IMLI…ADNI), 377-397 (IYLI…LGLA), 406-426 (GFDV…FGTV), and 453-473 (FGAF…SAAL).

The protein belongs to the sodium:solute symporter (SSF) (TC 2.A.21) family.

Its subcellular location is the membrane. It catalyses the reaction spermidine(in) = spermidine(out). In terms of biological role, spermidine transporter that is also used by salivary gland-secreted histatin 5 (Hst 5) to enter into candidal cells. A major component of host nonimmune defense systems is salivary histatins, a family of small (3-4 kDa), histidine-rich, cationic proteins secreted by major salivary glands in humans and higher primates. Hst 5 is the most potent of the 12 histatin family members and has fungicidal activity against blastoconidial and filamentous forms of Candida albicans. DUR31 only functions under high concentrations of Hst 5. Hst 5 cojugates to spermidine to be uptaken by DUR31. This Candida albicans (strain SC5314 / ATCC MYA-2876) (Yeast) protein is Spermidine transporter DUR31.